Here is a 659-residue protein sequence, read N- to C-terminus: Envelope glycoprotein (659 aa).

The signal sequence occupies residues 1-35 (MLLISNPRHLGHPMSPGNWKRLIILLSCVFGGAEM). Topologically, residues 36–606 (NQQHNNPHQP…NRSPWLTTLL (571 aa)) are extracellular. 2 disulfides stabilise this stretch: Cys141-Cys162 and Cys154-Cys167. A disordered region spans residues 278 to 301 (LSPPASPIPTVQASPPAPSTPSPT). The N-linked (GlcNAc...) asparagine; by host glycan is linked to Asn318. 3 cysteine pairs are disulfide-bonded: Cys328–Cys331, Cys328–Cys558, and Cys550–Cys557. The CXXC motif lies at 328–331 (CWLC). N-linked (GlcNAc...) asparagine; by host glycosylation is found at Asn389, Asn395, Asn407, and Asn427. Residues 466–486 (VSLTLAVLLGLGVAAGIGTGS) are fusion peptide. A coiled-coil region spans residues 506–532 (AMDTDLRALQDSISKLEDSLTSLSEVV). An immunosuppression region spans residues 533-549 (LQNRRGLDLLFLKEGGL). The CX6CC motif lies at 550–558 (CAALKEECC). A coiled-coil region spans residues 567 to 587 (VRDSMRRLKERLDKRQLEHQK). A helical transmembrane segment spans residues 607–627 (SALAGPLLLLLLLLTLGPCVI). Cys625 carries the S-palmitoyl cysteine; by host lipid modification. Residues 628–659 (NKLVQFINDRVSAVRILVLRHKYQTLDNEDNL) lie on the Cytoplasmic side of the membrane. Positions 650-653 (YQTL) match the YXXL motif; contains endocytosis signal motif.

In terms of assembly, the mature envelope protein (Env) consists of a trimer of SU-TM heterodimers attached by a labile interchain disulfide bond. In terms of processing, specific enzymatic cleavages in vivo yield mature proteins. Envelope glycoproteins are synthesized as an inactive precursor that is N-glycosylated and processed likely by host cell furin or by a furin-like protease in the Golgi to yield the mature SU and TM proteins. The cleavage site between SU and TM requires the minimal sequence [KR]-X-[KR]-R. The R-peptide is released from the C-terminus of the cytoplasmic tail of the TM protein upon particle formation as a result of proteolytic cleavage by the viral protease. Cleavage of this peptide is required for TM to become fusogenic. The CXXC motif is highly conserved across a broad range of retroviral envelope proteins. It is thought to participate in the formation of a labile disulfide bond possibly with the CX6CC motif present in the transmembrane protein. Isomerization of the intersubunit disulfide bond to an SU intrachain disulfide bond is thought to occur upon receptor recognition in order to allow membrane fusion. Post-translationally, the transmembrane protein is palmitoylated. In terms of processing, the R-peptide is palmitoylated.

Its subcellular location is the virion membrane. It localises to the host cell membrane. Its function is as follows. The surface protein (SU) attaches the virus to the host cell by binding to its receptor. This interaction triggers the refolding of the transmembrane protein (TM) and is thought to activate its fusogenic potential by unmasking its fusion peptide. Fusion occurs at the host cell plasma membrane. In terms of biological role, the transmembrane protein (TM) acts as a class I viral fusion protein. Under the current model, the protein has at least 3 conformational states: pre-fusion native state, pre-hairpin intermediate state, and post-fusion hairpin state. During viral and target cell membrane fusion, the coiled coil regions (heptad repeats) assume a trimer-of-hairpins structure, positioning the fusion peptide in close proximity to the C-terminal region of the ectodomain. The formation of this structure appears to drive apposition and subsequent fusion of viral and target cell membranes. Membranes fusion leads to delivery of the nucleocapsid into the cytoplasm. The protein is Envelope glycoprotein (env) of Phascolarctos cinereus (Koala).